Consider the following 468-residue polypeptide: Asparagine--tRNA ligase (468 aa).

This sequence belongs to the class-II aminoacyl-tRNA synthetase family. Homodimer.

It localises to the cytoplasm. The enzyme catalyses tRNA(Asn) + L-asparagine + ATP = L-asparaginyl-tRNA(Asn) + AMP + diphosphate + H(+). The chain is Asparagine--tRNA ligase from Parabacteroides distasonis (strain ATCC 8503 / DSM 20701 / CIP 104284 / JCM 5825 / NCTC 11152).